A 53-amino-acid chain; its full sequence is uncharacterized protein (53 aa).

The signal sequence occupies residues 1–23 (MSILLKILFKLLLLILSITFVIT).

This is an uncharacterized protein from Acheta domesticus (House cricket).